The primary structure comprises 455 residues: MNIVILAAGMGKRMRSALPKVLHPLTGKPLLAHVIETARTMSPTRLVVVVGHGGDRVREMVGAPDIAFATQDKQLGTGHAVMQAVDQLDESVPTLVLYGDVPLTRAETLSALVGAAGNDHLGVLTVHLGDPTGYGRIVRDAAGRITRIVEQKDANETQLAIHEVNTGILVCPTAKLKSWLATLSNDNAQGEYYLTDVIERAASEGVPITSAHPLAEWETLGVNSKVQLAELERIHQRNLAQQLLEDGVTLIDPARIDVRGKLTCGRDVVIDVNCIFEGDVTLADGVRIGAHTVIRDAAIEAGAEILPFCHIERAKVGADSRIGPYARLRPGTELAEDVHIGNFVEVKNSQIAAHSKANHLAYVGDATVGSRVNIGAGTITCNYDGANKFRTVIEDDAFIGSDTQLVAPVRVGKGATLGAGTTLTKDAPEGKLTVSRARQVTIDSWQRPVKQKKEG.

The interval 1–225 is pyrophosphorylase; the sequence is MNIVILAAGM…EWETLGVNSK (225 aa). Residues 6 to 9, K20, Q71, 76 to 77, 98 to 100, G135, E150, N165, and N223 each bind UDP-N-acetyl-alpha-D-glucosamine; these read LAAG, GT, and YGD. D100 lines the Mg(2+) pocket. Residue N223 participates in Mg(2+) binding. The linker stretch occupies residues 226–246; that stretch reads VQLAELERIHQRNLAQQLLED. The interval 247–455 is N-acetyltransferase; it reads GVTLIDPARI…QRPVKQKKEG (209 aa). R329 and K347 together coordinate UDP-N-acetyl-alpha-D-glucosamine. The active-site Proton acceptor is H359. Y362 and N373 together coordinate UDP-N-acetyl-alpha-D-glucosamine. Acetyl-CoA-binding positions include A376, 382–383, S401, A419, and R436; that span reads NY.

The protein in the N-terminal section; belongs to the N-acetylglucosamine-1-phosphate uridyltransferase family. In the C-terminal section; belongs to the transferase hexapeptide repeat family. Homotrimer. Mg(2+) is required as a cofactor.

The protein localises to the cytoplasm. It carries out the reaction alpha-D-glucosamine 1-phosphate + acetyl-CoA = N-acetyl-alpha-D-glucosamine 1-phosphate + CoA + H(+). It catalyses the reaction N-acetyl-alpha-D-glucosamine 1-phosphate + UTP + H(+) = UDP-N-acetyl-alpha-D-glucosamine + diphosphate. It functions in the pathway nucleotide-sugar biosynthesis; UDP-N-acetyl-alpha-D-glucosamine biosynthesis; N-acetyl-alpha-D-glucosamine 1-phosphate from alpha-D-glucosamine 6-phosphate (route II): step 2/2. Its pathway is nucleotide-sugar biosynthesis; UDP-N-acetyl-alpha-D-glucosamine biosynthesis; UDP-N-acetyl-alpha-D-glucosamine from N-acetyl-alpha-D-glucosamine 1-phosphate: step 1/1. The protein operates within bacterial outer membrane biogenesis; LPS lipid A biosynthesis. Its function is as follows. Catalyzes the last two sequential reactions in the de novo biosynthetic pathway for UDP-N-acetylglucosamine (UDP-GlcNAc). The C-terminal domain catalyzes the transfer of acetyl group from acetyl coenzyme A to glucosamine-1-phosphate (GlcN-1-P) to produce N-acetylglucosamine-1-phosphate (GlcNAc-1-P), which is converted into UDP-GlcNAc by the transfer of uridine 5-monophosphate (from uridine 5-triphosphate), a reaction catalyzed by the N-terminal domain. The protein is Bifunctional protein GlmU of Ralstonia pickettii (strain 12J).